A 56-amino-acid chain; its full sequence is Turripeptide XIV-01 (56 aa).

Residues 1–21 form the signal peptide; the sequence is MRFHVLLTVALLLTSLMSIEA. Positions 22–30 are excised as a propeptide; that stretch reads KPVNGAEME.

In terms of processing, contains 2 disulfide bonds. As to expression, expressed by the venom duct.

Its subcellular location is the secreted. The sequence is that of Turripeptide XIV-01 from Gemmula speciosa (Splendid gem-turris).